The following is a 323-amino-acid chain: Elongation factor P--(R)-beta-lysine ligase (323 aa).

Residue 76–78 coordinates substrate; it reads SPE. ATP contacts are provided by residues 100 to 102 and N109; that span reads RNE. Y118 is a binding site for substrate. Position 242 to 243 (242 to 243) interacts with ATP; that stretch reads EL. E249 provides a ligand contact to substrate. G298 provides a ligand contact to ATP.

This sequence belongs to the class-II aminoacyl-tRNA synthetase family. EpmA subfamily. In terms of assembly, homodimer.

It carries out the reaction D-beta-lysine + L-lysyl-[protein] + ATP = N(6)-((3R)-3,6-diaminohexanoyl)-L-lysyl-[protein] + AMP + diphosphate + H(+). In terms of biological role, with EpmB is involved in the beta-lysylation step of the post-translational modification of translation elongation factor P (EF-P). Catalyzes the ATP-dependent activation of (R)-beta-lysine produced by EpmB, forming a lysyl-adenylate, from which the beta-lysyl moiety is then transferred to the epsilon-amino group of a conserved specific lysine residue in EF-P. The chain is Elongation factor P--(R)-beta-lysine ligase from Haemophilus influenzae (strain ATCC 51907 / DSM 11121 / KW20 / Rd).